A 109-amino-acid polypeptide reads, in one-letter code: Hainantoxin-XVIII-5 (109 aa).

The N-terminal stretch at 1-18 is a signal peptide; sequence MKLSIIIIATSLVIAVVA. A propeptide spanning residues 19–46 is cleaved from the precursor; it reads FPSKDSKAIENDKTEQRMEIVVQETARA. 4 disulfides stabilise this stretch: C47-C62, C55-C68, C59-C108, and C61-C81.

Belongs to the neurotoxin 25 family. F7 subfamily. As to expression, expressed by the venom gland.

It localises to the secreted. Its function is as follows. Putative ion channel inhibitor. In Cyriopagopus hainanus (Chinese bird spider), this protein is Hainantoxin-XVIII-5.